A 328-amino-acid polypeptide reads, in one-letter code: Phenylalanine--tRNA ligase alpha subunit (328 aa).

Glutamate 245 lines the Mg(2+) pocket.

Belongs to the class-II aminoacyl-tRNA synthetase family. Phe-tRNA synthetase alpha subunit type 1 subfamily. As to quaternary structure, tetramer of two alpha and two beta subunits. The cofactor is Mg(2+).

The protein localises to the cytoplasm. The catalysed reaction is tRNA(Phe) + L-phenylalanine + ATP = L-phenylalanyl-tRNA(Phe) + AMP + diphosphate + H(+). This is Phenylalanine--tRNA ligase alpha subunit (pheS) from Helicobacter pylori (strain ATCC 700392 / 26695) (Campylobacter pylori).